Reading from the N-terminus, the 209-residue chain is Auxin-binding protein ABP19b (209 aa).

The N-terminal stretch at 1–18 is a signal peptide; sequence MIFPIFFTFFLLLSTSHA. A disulfide bond links C24 and C39. Residues 53-199 form the Cupin type-1 domain; sequence SGLGIAGNTT…TTLLDAPQIK (147 aa). N-linked (GlcNAc...) asparagine glycosylation is present at N60. Mn(2+) contacts are provided by H101, H103, E108, and H147.

The protein belongs to the germin family. Interacts with ABP20.

Its subcellular location is the secreted. It is found in the extracellular space. The protein resides in the apoplast. The protein localises to the cell wall. Probable receptor for the plant growth-promoting hormone auxin. The chain is Auxin-binding protein ABP19b (ABP19B) from Prunus persica (Peach).